The following is a 341-amino-acid chain: Protein pelota homolog (341 aa).

It belongs to the eukaryotic release factor 1 family. Pelota subfamily. As to quaternary structure, monomer. The cofactor is a divalent metal cation.

It is found in the cytoplasm. In terms of biological role, may function in recognizing stalled ribosomes, interact with stem-loop structures in stalled mRNA molecules, and effect endonucleolytic cleavage of the mRNA. May play a role in the release non-functional ribosomes and degradation of damaged mRNAs. Has endoribonuclease activity. This Methanoculleus marisnigri (strain ATCC 35101 / DSM 1498 / JR1) protein is Protein pelota homolog.